Consider the following 150-residue polypeptide: MKYQQLENLESGWKWKYLVKKHREGELITRYVEASAAQEAVNLLLALENEPVRVNVWIDRHMNPALLNRMRQTIRARRKRHFNAEHQHTRKKSIDLEFMVWQRLAGLAQRRGKTLSETIVQLIEDAEHKEKYATQMTTLKQDLQALLGKK.

Belongs to the MatP family. Homodimer.

The protein localises to the cytoplasm. In terms of biological role, required for spatial organization of the terminus region of the chromosome (Ter macrodomain) during the cell cycle. Prevents early segregation of duplicated Ter macrodomains during cell division. Binds specifically to matS, which is a 13 bp signature motif repeated within the Ter macrodomain. The chain is Macrodomain Ter protein from Salmonella typhi.